Reading from the N-terminus, the 227-residue chain is Cytochrome c oxidase subunit 2 (227 aa).

Residues 1–14 (MAHPVQLSLQDATS) are Mitochondrial intermembrane-facing. Residues 15-45 (PVMEELITFHDHAFMAMSLISFLVLYALLST) form a helical membrane-spanning segment. At 46–59 (LTTKLTNTSITDAQ) the chain is on the mitochondrial matrix side. Residues 60-87 (EMETIWTILPAIILILIALPSLRILYLT) traverse the membrane as a helical segment. Topologically, residues 88–227 (DEVNDPSFTI…IFEMGPVLTL (140 aa)) are mitochondrial intermembrane. 6 residues coordinate Cu cation: His161, Cys196, Glu198, Cys200, His204, and Met207. Glu198 lines the Mg(2+) pocket.

The protein belongs to the cytochrome c oxidase subunit 2 family. As to quaternary structure, component of the cytochrome c oxidase (complex IV, CIV), a multisubunit enzyme composed of 14 subunits. The complex is composed of a catalytic core of 3 subunits MT-CO1, MT-CO2 and MT-CO3, encoded in the mitochondrial DNA, and 11 supernumerary subunits COX4I, COX5A, COX5B, COX6A, COX6B, COX6C, COX7A, COX7B, COX7C, COX8 and NDUFA4, which are encoded in the nuclear genome. The complex exists as a monomer or a dimer and forms supercomplexes (SCs) in the inner mitochondrial membrane with NADH-ubiquinone oxidoreductase (complex I, CI) and ubiquinol-cytochrome c oxidoreductase (cytochrome b-c1 complex, complex III, CIII), resulting in different assemblies (supercomplex SCI(1)III(2)IV(1) and megacomplex MCI(2)III(2)IV(2)). Found in a complex with TMEM177, COA6, COX18, COX20, SCO1 and SCO2. Interacts with TMEM177 in a COX20-dependent manner. Interacts with COX20. Interacts with COX16. Cu cation is required as a cofactor.

The protein localises to the mitochondrion inner membrane. The enzyme catalyses 4 Fe(II)-[cytochrome c] + O2 + 8 H(+)(in) = 4 Fe(III)-[cytochrome c] + 2 H2O + 4 H(+)(out). Functionally, component of the cytochrome c oxidase, the last enzyme in the mitochondrial electron transport chain which drives oxidative phosphorylation. The respiratory chain contains 3 multisubunit complexes succinate dehydrogenase (complex II, CII), ubiquinol-cytochrome c oxidoreductase (cytochrome b-c1 complex, complex III, CIII) and cytochrome c oxidase (complex IV, CIV), that cooperate to transfer electrons derived from NADH and succinate to molecular oxygen, creating an electrochemical gradient over the inner membrane that drives transmembrane transport and the ATP synthase. Cytochrome c oxidase is the component of the respiratory chain that catalyzes the reduction of oxygen to water. Electrons originating from reduced cytochrome c in the intermembrane space (IMS) are transferred via the dinuclear copper A center (CU(A)) of subunit 2 and heme A of subunit 1 to the active site in subunit 1, a binuclear center (BNC) formed by heme A3 and copper B (CU(B)). The BNC reduces molecular oxygen to 2 water molecules using 4 electrons from cytochrome c in the IMS and 4 protons from the mitochondrial matrix. The polypeptide is Cytochrome c oxidase subunit 2 (MT-CO2) (Macaca mulatta (Rhesus macaque)).